Here is a 171-residue protein sequence, read N- to C-terminus: MIREIIRMGDKRLLRVAPPVTNLGSAELHTLVADMFETMDAARGVGLAAPQIAVDLQLMVFGFDASERYPEAPAVPRTALANAQIEPLSEDMENGWEGCLSIPGLRAVIPRYRFIRYRGFAPDGSPIERDAEGFHARVVQHEYDNLVGRLYPSRIENFDTFGFEDVLSYDL.

Positions 99 and 141 each coordinate Fe cation. The active site involves E142.

This sequence belongs to the polypeptide deformylase family. The cofactor is Fe(2+).

The catalysed reaction is N-terminal N-formyl-L-methionyl-[peptide] + H2O = N-terminal L-methionyl-[peptide] + formate. Functionally, removes the formyl group from the N-terminal Met of newly synthesized proteins. Requires at least a dipeptide for an efficient rate of reaction. N-terminal L-methionine is a prerequisite for activity but the enzyme has broad specificity at other positions. The protein is Peptide deformylase 1 of Xanthomonas axonopodis pv. citri (strain 306).